Reading from the N-terminus, the 479-residue chain is Adenosylhomocysteinase (479 aa).

Residues T66, D142, and E203 each coordinate substrate. Residue 204-206 (TTT) coordinates NAD(+). 2 residues coordinate substrate: K233 and D237. Residues N238, 267-272 (GYGDVG), E290, N325, 346-348 (IGH), and N394 each bind NAD(+).

The protein belongs to the adenosylhomocysteinase family. NAD(+) is required as a cofactor.

The protein resides in the cytoplasm. The enzyme catalyses S-adenosyl-L-homocysteine + H2O = L-homocysteine + adenosine. The protein operates within amino-acid biosynthesis; L-homocysteine biosynthesis; L-homocysteine from S-adenosyl-L-homocysteine: step 1/1. May play a key role in the regulation of the intracellular concentration of adenosylhomocysteine. The polypeptide is Adenosylhomocysteinase (Nitratidesulfovibrio vulgaris (strain ATCC 29579 / DSM 644 / CCUG 34227 / NCIMB 8303 / VKM B-1760 / Hildenborough) (Desulfovibrio vulgaris)).